A 104-amino-acid polypeptide reads, in one-letter code: Large ribosomal subunit protein bL21 (104 aa).

Belongs to the bacterial ribosomal protein bL21 family. Part of the 50S ribosomal subunit. Contacts protein L20.

In terms of biological role, this protein binds to 23S rRNA in the presence of protein L20. In Streptococcus mutans serotype c (strain ATCC 700610 / UA159), this protein is Large ribosomal subunit protein bL21.